A 154-amino-acid chain; its full sequence is Lipoprotein signal peptidase (154 aa).

Transmembrane regions (helical) follow at residues 7–27 (VLYL…KNYI), 58–78 (IFSG…AVVV), and 88–108 (NWLF…NFID). Residues aspartate 117 and aspartate 133 contribute to the active site. Residues 128 to 148 (IFNIADSAITVGIVLVFIYLI) traverse the membrane as a helical segment.

The protein belongs to the peptidase A8 family.

The protein localises to the cell membrane. It carries out the reaction Release of signal peptides from bacterial membrane prolipoproteins. Hydrolyzes -Xaa-Yaa-Zaa-|-(S,diacylglyceryl)Cys-, in which Xaa is hydrophobic (preferably Leu), and Yaa (Ala or Ser) and Zaa (Gly or Ala) have small, neutral side chains.. Its pathway is protein modification; lipoprotein biosynthesis (signal peptide cleavage). In terms of biological role, this protein specifically catalyzes the removal of signal peptides from prolipoproteins. In Lactobacillus gasseri (strain ATCC 33323 / DSM 20243 / BCRC 14619 / CIP 102991 / JCM 1131 / KCTC 3163 / NCIMB 11718 / NCTC 13722 / AM63), this protein is Lipoprotein signal peptidase.